A 228-amino-acid polypeptide reads, in one-letter code: ATP-dependent dethiobiotin synthetase BioD (228 aa).

Residue 13–18 (DIGKTF) participates in ATP binding. Threonine 17 lines the Mg(2+) pocket. Lysine 38 is an active-site residue. Serine 42 lines the substrate pocket. Residues aspartate 55, 116–119 (EGSG), 179–180 (NK), and 208–210 (PKI) contribute to the ATP site. The Mg(2+) site is built by aspartate 55 and glutamate 116.

The protein belongs to the dethiobiotin synthetase family. As to quaternary structure, homodimer. It depends on Mg(2+) as a cofactor.

It is found in the cytoplasm. It carries out the reaction (7R,8S)-7,8-diammoniononanoate + CO2 + ATP = (4R,5S)-dethiobiotin + ADP + phosphate + 3 H(+). Its pathway is cofactor biosynthesis; biotin biosynthesis; biotin from 7,8-diaminononanoate: step 1/2. Its function is as follows. Catalyzes a mechanistically unusual reaction, the ATP-dependent insertion of CO2 between the N7 and N8 nitrogen atoms of 7,8-diaminopelargonic acid (DAPA, also called 7,8-diammoniononanoate) to form a ureido ring. The polypeptide is ATP-dependent dethiobiotin synthetase BioD (Clostridium perfringens (strain ATCC 13124 / DSM 756 / JCM 1290 / NCIMB 6125 / NCTC 8237 / Type A)).